A 248-amino-acid chain; its full sequence is ATP synthase subunit a, chloroplastic (248 aa).

5 consecutive transmembrane segments (helical) span residues 37–57 (AQVLITSWVVIAILLGLSIVA), 96–116 (VPFIGTMFLFIFVSNWSGALF), 135–155 (INTTVALALLTSVAYFYAGLH), 200–220 (LVVAVLISLVPLVVPIPMMFL), and 221–241 (GLFTSAIQALIFATLAAAYIG).

Belongs to the ATPase A chain family. F-type ATPases have 2 components, CF(1) - the catalytic core - and CF(0) - the membrane proton channel. CF(1) has five subunits: alpha(3), beta(3), gamma(1), delta(1), epsilon(1). CF(0) has four main subunits: a, b, b' and c.

The protein localises to the plastid. It localises to the chloroplast thylakoid membrane. In terms of biological role, key component of the proton channel; it plays a direct role in the translocation of protons across the membrane. In Angiopteris evecta (Mule's foot fern), this protein is ATP synthase subunit a, chloroplastic.